The chain runs to 423 residues: Inactive autotransporter heptosyltransferase BimC (423 aa).

Positions 1–10 (MPKVTFSGSA) are enriched in polar residues. A disordered region spans residues 1–49 (MPKVTFSGSAPTLGVHAPPALDPRQPASPPPAASNGTHARGFSPPADMP). Fe(3+)-binding residues include C371, C374, C390, and C402.

The protein belongs to the glycosyltransferase 9 family. Homotrimer or homotetramer. Requires Fe(3+) as cofactor.

Its subcellular location is the cell inner membrane. It localises to the cytoplasm. In terms of biological role, iron-binding protein which is required for the asymmetric polar distribution of the autotransporter BimA on the bacterial surface prior to its translocation into bacterial periplasm. Lacks heptosyltransferase activity. The chain is Inactive autotransporter heptosyltransferase BimC from Burkholderia thailandensis (strain ATCC 700388 / DSM 13276 / CCUG 48851 / CIP 106301 / E264).